Consider the following 138-residue polypeptide: Large ribosomal subunit protein uL16 (138 aa).

It belongs to the universal ribosomal protein uL16 family. In terms of assembly, part of the 50S ribosomal subunit.

Functionally, binds 23S rRNA and is also seen to make contacts with the A and possibly P site tRNAs. The polypeptide is Large ribosomal subunit protein uL16 (Paramagnetospirillum magneticum (strain ATCC 700264 / AMB-1) (Magnetospirillum magneticum)).